The sequence spans 596 residues: Probable tripeptidyl-peptidase SED2 (596 aa).

The first 16 residues, 1–16 (MRLLKFVCLLASVAAA), serve as a signal peptide directing secretion. Positions 17-203 (KPTPGASHKV…LESMSVEEFA (187 aa)) are cleaved as a propeptide — removed in mature form. Positions 210-596 (LVTTACLREL…NFQALTKVLP (387 aa)) constitute a Peptidase S53 domain. Asn-265 is a glycosylation site (N-linked (GlcNAc...) asparagine). Active-site charge relay system residues include Glu-286 and Asp-290. A glycan (N-linked (GlcNAc...) asparagine) is linked at Asn-403. Ser-501 functions as the Charge relay system in the catalytic mechanism. Positions 543 and 544 each coordinate Ca(2+). Asn-572 carries an N-linked (GlcNAc...) asparagine glycan. The Ca(2+) site is built by Gly-576 and Asp-578.

Requires Ca(2+) as cofactor.

Its subcellular location is the secreted. It is found in the extracellular space. The catalysed reaction is Release of an N-terminal tripeptide from a polypeptide.. In terms of biological role, secreted tripeptidyl-peptidase which degrades proteins at acidic pHs and is involved in virulence. In Arthroderma benhamiae (strain ATCC MYA-4681 / CBS 112371) (Trichophyton mentagrophytes), this protein is Probable tripeptidyl-peptidase SED2 (SED2).